The primary structure comprises 481 residues: 4-O-methyl-glucuronoyl methylesterase (481 aa).

Positions 1-21 (MVSQTVVSSLLVVLGAAGVRA) are cleaved as a signal peptide. Positions 23-59 (QRQSLWGQCGGSGWSGPTLCVDGAWCNPQNQWYHQCI) constitute a CBM1 domain. 3 disulfide bridges follow: Cys108–Cys143, Cys292–Cys428, and Cys324–Cys400. The short motif at 291–296 (GCSRNG) is the GXSYXG catalytic site motif element. Catalysis depends on Ser293, which acts as the Nucleophile. The substrate site is built by Lys297, Gln339, Glu347, and Trp391. The active-site Proton donor/acceptor is His427.

Belongs to the carbohydrate esterase 15 (CE15) family.

The protein resides in the secreted. The enzyme catalyses a 4-O-methyl-alpha-D-glucuronosyl ester derivative + H2O = 4-O-methyl-alpha-D-glucuronate derivative + an alcohol + H(+). Glucuronoyl esterase which may play a significant role in biomass degradation, as it is considered to disconnect hemicellulose from lignin through the hydrolysis of the ester bond between 4-O-methyl-D-glucuronic acid residues of glucuronoxylans and aromatic alcohols of lignin. This chain is 4-O-methyl-glucuronoyl methylesterase, found in Podospora anserina (strain S / ATCC MYA-4624 / DSM 980 / FGSC 10383) (Pleurage anserina).